A 359-amino-acid polypeptide reads, in one-letter code: Histamine H2 receptor (359 aa).

Over methionine 1–serine 22 the chain is Extracellular. N-linked (GlcNAc...) asparagine glycosylation occurs at asparagine 4. The chain crosses the membrane as a helical span at residues valine 23–glycine 44. Residues leucine 45–isoleucine 57 lie on the Cytoplasmic side of the membrane. Residues valine 58 to serine 81 form a helical membrane-spanning segment. Residues cysteine 82–asparagine 92 lie on the Extracellular side of the membrane. Residues cysteine 91 and cysteine 174 are joined by a disulfide bond. The helical transmembrane segment at isoleucine 93–leucine 114 threads the bilayer. Residues aspartate 115–arginine 134 are Cytoplasmic-facing. A helical transmembrane segment spans residues valine 135 to asparagine 159. At serine 160 to glutamate 180 the chain is on the extracellular side. The helical transmembrane segment at valine 181–arginine 204 threads the bilayer. The Cytoplasmic portion of the chain corresponds to isoleucine 205 to valine 234. The chain crosses the membrane as a helical span at residues threonine 235–glycine 258. The Extracellular portion of the chain corresponds to leucine 259 to glutamate 267. The chain crosses the membrane as a helical span at residues valine 268–alanine 289. Topologically, residues alanine 290 to arginine 359 are cytoplasmic. Cysteine 305 carries S-palmitoyl cysteine lipidation.

The protein belongs to the G-protein coupled receptor 1 family.

It is found in the cell membrane. In terms of biological role, the H2 subclass of histamine receptors mediates gastric acid secretion. The activity of this receptor is mediated by G proteins which activate adenylyl cyclase. The protein is Histamine H2 receptor (HRH2) of Cavia porcellus (Guinea pig).